Here is an 88-residue protein sequence, read N- to C-terminus: Ribonuclease P protein component 1 (88 aa).

The protein belongs to the eukaryotic/archaeal RNase P protein component 1 family. Consists of a catalytic RNA component and at least 4-5 protein subunits.

The protein resides in the cytoplasm. The enzyme catalyses Endonucleolytic cleavage of RNA, removing 5'-extranucleotides from tRNA precursor.. In terms of biological role, part of ribonuclease P, a protein complex that generates mature tRNA molecules by cleaving their 5'-ends. The polypeptide is Ribonuclease P protein component 1 (Nitrosopumilus maritimus (strain SCM1)).